The chain runs to 67 residues: DNA-directed RNA polymerase subunit omega (67 aa).

It belongs to the RNA polymerase subunit omega family. As to quaternary structure, the RNAP catalytic core consists of 2 alpha, 1 beta, 1 beta' and 1 omega subunit. When a sigma factor is associated with the core the holoenzyme is formed, which can initiate transcription.

The enzyme catalyses RNA(n) + a ribonucleoside 5'-triphosphate = RNA(n+1) + diphosphate. Its function is as follows. Promotes RNA polymerase assembly. Latches the N- and C-terminal regions of the beta' subunit thereby facilitating its interaction with the beta and alpha subunits. The protein is DNA-directed RNA polymerase subunit omega of Bordetella pertussis (strain Tohama I / ATCC BAA-589 / NCTC 13251).